The primary structure comprises 591 residues: Asparagine synthetase [glutamine-hydrolyzing] 2 (591 aa).

The For GATase activity role is filled by Cys2. Positions Cys2–Gly185 constitute a Glutamine amidotransferase type-2 domain. L-glutamine-binding positions include Arg50–Val54, Asn75–Glu77, and Asp98. Positions Pro193 to Pro516 constitute an Asparagine synthetase domain. Residues Leu231, Ile267, and Ser341–Gly342 each bind ATP.

As to expression, expressed in companion cells of leaf sheath vascular bundles, and phloem-parenchyma cells, nucellar projections and nucellar epidermis of dorsal vascular bundles of grains.

The catalysed reaction is L-aspartate + L-glutamine + ATP + H2O = L-asparagine + L-glutamate + AMP + diphosphate + H(+). It functions in the pathway amino-acid biosynthesis; L-asparagine biosynthesis; L-asparagine from L-aspartate (L-Gln route): step 1/1. Functionally, essential for nitrogen assimilation, distribution and remobilization within the plant via the phloem. This Oryza sativa subsp. japonica (Rice) protein is Asparagine synthetase [glutamine-hydrolyzing] 2.